A 400-amino-acid chain; its full sequence is S-adenosylmethionine synthase (400 aa).

Residue 137–142 participates in ATP binding; it reads GEGSGD.

It belongs to the AdoMet synthase 2 family. Mg(2+) serves as cofactor.

The enzyme catalyses L-methionine + ATP + H2O = S-adenosyl-L-methionine + phosphate + diphosphate. The protein operates within amino-acid biosynthesis; S-adenosyl-L-methionine biosynthesis; S-adenosyl-L-methionine from L-methionine: step 1/1. Functionally, catalyzes the formation of S-adenosylmethionine from methionine and ATP. In Haloarcula marismortui (strain ATCC 43049 / DSM 3752 / JCM 8966 / VKM B-1809) (Halobacterium marismortui), this protein is S-adenosylmethionine synthase.